A 668-amino-acid chain; its full sequence is Fructose-1,6-bisphosphatase class 3 (668 aa).

It belongs to the FBPase class 3 family. Requires Mn(2+) as cofactor.

It catalyses the reaction beta-D-fructose 1,6-bisphosphate + H2O = beta-D-fructose 6-phosphate + phosphate. It functions in the pathway carbohydrate biosynthesis; gluconeogenesis. This chain is Fructose-1,6-bisphosphatase class 3, found in Clostridium botulinum (strain Loch Maree / Type A3).